A 343-amino-acid chain; its full sequence is Homeobox protein Hox-D13 (343 aa).

2 disordered regions span residues 1 to 28 (MSRAGSWDMDGLRADGGGAGGAPASSSS) and 78 to 115 (GTSERTGSSSSSSSSAVVAARPEAPPAKECPAPTPAAA). Over residues 85–115 (SSSSSSSSAVVAARPEAPPAKECPAPTPAAA) the composition is skewed to low complexity. The homeobox DNA-binding region spans 276 to 335 (GRKKRVPYTKLQLKELENEYAINKFINKDKRRRISAATNLSERQVTIWFQNRRVKDKKIV).

Belongs to the Abd-B homeobox family.

The protein resides in the nucleus. Sequence-specific transcription factor that binds gene promoters and activates their transcription. Part of a developmental regulatory system that provides cells with specific positional identities on the anterior-posterior axis. This Homo sapiens (Human) protein is Homeobox protein Hox-D13 (HOXD13).